A 128-amino-acid chain; its full sequence is Large ribosomal subunit protein bL12 (128 aa).

This sequence belongs to the bacterial ribosomal protein bL12 family. As to quaternary structure, homodimer. Part of the ribosomal stalk of the 50S ribosomal subunit. Forms a multimeric L10(L12)X complex, where L10 forms an elongated spine to which 2 to 4 L12 dimers bind in a sequential fashion. Binds GTP-bound translation factors.

Its function is as follows. Forms part of the ribosomal stalk which helps the ribosome interact with GTP-bound translation factors. Is thus essential for accurate translation. The polypeptide is Large ribosomal subunit protein bL12 (Petrotoga mobilis (strain DSM 10674 / SJ95)).